The chain runs to 247 residues: Oocyte zinc finger protein XlCOF20 (247 aa).

C2H2-type zinc fingers lie at residues 6–28, 34–56, 62–84, 90–112, 118–140, 146–168, 174–196, and 225–247; these read YDCR…QRVH, FPCT…QRVH, FICS…LRVH, FVCT…QRVH, FTCT…LRVH, FVCT…LRVH, FMCA…QRIC, and QSCA…MRVH.

The protein belongs to the krueppel C2H2-type zinc-finger protein family.

It localises to the nucleus. Its function is as follows. May be involved in transcriptional regulation. The sequence is that of Oocyte zinc finger protein XlCOF20 from Xenopus laevis (African clawed frog).